A 476-amino-acid polypeptide reads, in one-letter code: Probable serine carboxypeptidase CPVL (476 aa).

An N-terminal signal peptide occupies residues 1-22; it reads MVGTMWKVIVSLVLLMPGSCDG. N-linked (GlcNAc...) asparagine glycans are attached at residues asparagine 81 and asparagine 132. Residue serine 204 is part of the active site. N-linked (GlcNAc...) asparagine glycans are attached at residues asparagine 307 and asparagine 346. Active-site residues include aspartate 388 and histidine 448.

It belongs to the peptidase S10 family.

In terms of biological role, may be involved in the digestion of phagocytosed particles in the lysosome, participation in an inflammatory protease cascade, and trimming of peptides for antigen presentation. This chain is Probable serine carboxypeptidase CPVL (CPVL), found in Pongo abelii (Sumatran orangutan).